Consider the following 190-residue polypeptide: Cytoglobin (190 aa).

A Globin domain is found at 18-167; it reads ELSEAERKAV…IYSHVTAAYK (150 aa). Cys38 and Cys83 are disulfide-bonded. Residues His81 and His113 each contribute to the heme b site.

It belongs to the globin family. As to quaternary structure, monomeric. Homodimer; disulfide-linked in vitro. Also homooligomeric in vitro. Post-translationally, the formation of an intramolecular disulfide bond between cysteines Cys-38 and Cys-83 specifically enhances the nitrite reductase activity. As to expression, widely expressed. Highest expression in heart, stomach, bladder and small intestine.

Its subcellular location is the cytoplasm. It localises to the nucleus. It catalyses the reaction Fe(II)-heme b-[protein] + nitric oxide + O2 = Fe(III)-heme b-[protein] + nitrate. The enzyme catalyses Fe(III)-heme b-[protein] + nitric oxide + H2O = Fe(II)-heme b-[protein] + nitrite + 2 H(+). The catalysed reaction is 2 superoxide + 2 H(+) = H2O2 + O2. It carries out the reaction H2O2 + AH2 = A + 2 H2O. With respect to regulation, the nitric oxide dioxygenase activity is activated by a reducing system composed of cytochrome b5, its upstream reductase CYB5R3 and NADH. Its function is as follows. Probable multifunctional globin with a hexacoordinated heme iron required for the catalysis of various reactions depending on redox condition of the cell as well as oxygen availability. Has a nitric oxide dioxygenase (NOD) activity and is most probably involved in cell-mediated and oxygen-dependent nitric oxide consumption. By scavenging this second messenger may regulate several biological processes including endothelium-mediated vasodilation and vascular tone. Under normoxic conditions functions as a nitric oxide dioxygenase (NOD) but under hypoxic conditions the globin may switch its function to that of a nitrite (NO2) reductase (NiR), generating nitric oxide. Could also have peroxidase and superoxide dismutase activities, detoxifying reactive oxygen species and protecting cells against oxidative stress. Also binds dioxygen with low affinity and could function as an oxygen sensor but has probably no function as a respiratory oxygen carrier. This Homo sapiens (Human) protein is Cytoglobin.